The chain runs to 118 residues: Developmental pluripotency-associated protein 5A (118 aa).

Residues 24 to 86 (PEVFQVQSLV…NNKIRAKWML (63 aa)) form the KH; atypical domain.

It belongs to the KHDC1 family.

It localises to the cytoplasm. In terms of biological role, involved in the maintenance of embryonic stem (ES) cell pluripotency. Dispensable for self-renewal of pluripotent ES cells and establishment of germ cells. Associates with specific target mRNAs. The chain is Developmental pluripotency-associated protein 5A (Dppa5a) from Mus musculus (Mouse).